The primary structure comprises 149 residues: Nucleoside diphosphate kinase (149 aa).

Lys-9, Phe-57, Arg-85, Thr-91, Arg-102, and Asn-112 together coordinate ATP. His-115 (pros-phosphohistidine intermediate) is an active-site residue.

The protein belongs to the NDK family. Mg(2+) is required as a cofactor.

It is found in the cytoplasm. It carries out the reaction a 2'-deoxyribonucleoside 5'-diphosphate + ATP = a 2'-deoxyribonucleoside 5'-triphosphate + ADP. It catalyses the reaction a ribonucleoside 5'-diphosphate + ATP = a ribonucleoside 5'-triphosphate + ADP. Its function is as follows. Major role in the synthesis of nucleoside triphosphates other than ATP. The ATP gamma phosphate is transferred to the NDP beta phosphate via a ping-pong mechanism, using a phosphorylated active-site intermediate. This chain is Nucleoside diphosphate kinase, found in Methanosarcina barkeri (strain Fusaro / DSM 804).